We begin with the raw amino-acid sequence, 283 residues long: Undecaprenyl-diphosphatase (283 aa).

Transmembrane regions (helical) follow at residues Gly40–Phe60, Ala85–Phe105, Leu113–Ala133, Ile153–Ser173, Ala193–Leu213, Leu227–Phe247, and Val259–Met279.

The protein belongs to the UppP family.

The protein resides in the cell inner membrane. The enzyme catalyses di-trans,octa-cis-undecaprenyl diphosphate + H2O = di-trans,octa-cis-undecaprenyl phosphate + phosphate + H(+). Catalyzes the dephosphorylation of undecaprenyl diphosphate (UPP). Confers resistance to bacitracin. This is Undecaprenyl-diphosphatase from Chlorobium limicola (strain DSM 245 / NBRC 103803 / 6330).